The primary structure comprises 260 residues: MSTNNSVLVLKVGGALLQCEMGMARLMDTAAAMIADGQQVLMVHGGGCLVDEQLAANGMETVKLEGLRVTPPEQMPIIAGALAGTSNKILQGAATKAGIVSVGMSLADGNTVSAKIKDERLGLVGEVSPKDATYLKFILSQGWMPICSSIAMMDDGQMLNVNADQAATVLAKLVGGKLVLLSDVSGVLDGKGQLIPSLNGKQIAELVKQGVIEKGMKVKVEAALEVAQWMGQAVQVASWRDASQLVALAKGEAVGTQIQP.

Substrate-binding positions include 46–47 (GG), arginine 68, and asparagine 160.

The protein belongs to the acetylglutamate kinase family. ArgB subfamily.

The protein localises to the cytoplasm. It carries out the reaction N-acetyl-L-glutamate + ATP = N-acetyl-L-glutamyl 5-phosphate + ADP. Its pathway is amino-acid biosynthesis; L-arginine biosynthesis; N(2)-acetyl-L-ornithine from L-glutamate: step 2/4. Functionally, catalyzes the ATP-dependent phosphorylation of N-acetyl-L-glutamate. The polypeptide is Acetylglutamate kinase (Shewanella sp. (strain MR-4)).